A 512-amino-acid chain; its full sequence is MQSGGRQAEAPGRGPRVLVVGGGIAGLGAAQRLCRHPAFSHLRVLEATARAGGRIRSEHSFGGVVEVGAHWIHGPSQGNPVFQLAAKYGLLGEKALSEENQLIETGGHVGLPSVSYASSGVSVSLELVAEMASLFYSLIDQTREFLQAAETTPPSVGEYLKEKIRQHMAGWTEDEETKKLKLAILKNLFNVECCVSGTHSMDLVALAPFGEYTVLPGLDCTFPEGYQGLTDCIMASLPKDVMVFDKPVKTIHWNGSFREASAPGETFPVLVECEDGDCFPAHHVVVTVPLGFFKKHLDTFFEPPLPTEKVEAIRKIGFGTNNKIFLEFEEPFWEPDCQHIQVVWEDMSPLEDTAPELQDAWFKKLIGFWVLPPFQASHVLCGFIAGLESEFMETLSDEDVLRSLTQVLRRVTGNPQLPAPRSMLRSCWHSAPYTRGSYSYVAVGSSGDDMDRLAQPLPSDGKGAQLQVLFAGEATHRTFYSTTHGALLSGWREADRLMTLWDPQAQWPEPRL.

M1 is subject to N-acetylmethionine. A propeptide spanning residues 1–6 (MQSGGR) is cleaved from the precursor. FAD-binding positions include A25, E46, R54, and 70 to 71 (HW). Residues H73 and V195 each contribute to the substrate site. V248 provides a ligand contact to FAD. N321 is a binding site for substrate. FAD-binding positions include E473 and 482 to 483 (TT). Residues 510-512 (PRL) carry the Microbody targeting signal motif.

This sequence belongs to the flavin monoamine oxidase family. Monomer. FAD serves as cofactor.

The protein localises to the peroxisome. It is found in the cytoplasm. It catalyses the reaction N(1)-acetylspermine + O2 + H2O = 3-acetamidopropanal + spermidine + H2O2. The catalysed reaction is N(1)-acetylspermidine + O2 + H2O = 3-acetamidopropanal + putrescine + H2O2. It carries out the reaction N(1),N(12)-diacetylspermine + O2 + H2O = 3-acetamidopropanal + N(1)-acetylspermidine + H2O2. Its pathway is amine and polyamine metabolism; spermine metabolism. Flavoenzyme which catalyzes the oxidation of N(1)-acetylspermine to spermidine and is thus involved in the polyamine back-conversion. Can also oxidize N(1)-acetylspermidine to putrescine. Substrate specificity: N(1)-acetylspermine = N(1)-acetylspermidine &gt; N(1),N(12)-diacylspermine &gt;&gt; spermine. Does not oxidize spermidine. Plays an important role in the regulation of polyamine intracellular concentration. The protein is Peroxisomal N(1)-acetyl-spermine/spermidine oxidase (PAOX) of Bos taurus (Bovine).